We begin with the raw amino-acid sequence, 245 residues long: High affinity immunoglobulin epsilon receptor subunit alpha (245 aa).

An N-terminal signal peptide occupies residues 1–23 (MDTGGSARLCLALVLISLGVMLT). Residues 24–204 (ATQKSVVSLD…DYTIEYRWLQ (181 aa)) lie on the Extracellular side of the membrane. Ig-like domains follow at residues 28–103 (SVVS…KPVY) and 113–181 (LQSS…LNKV). C49 and C91 are disulfide-bonded. 7 N-linked (GlcNAc...) asparagine glycosylation sites follow: N52, N53, N58, N65, N123, N158, and N167. The cysteines at positions 130 and 174 are disulfide-linked. Residues 205-223 (LIFPSLAVILFAVDTGLWF) form a helical membrane-spanning segment. At 224–245 (STHKQFESILKIQKTGKGKKKG) the chain is on the cytoplasmic side.

As to quaternary structure, tetramer of an alpha chain, a beta chain, and two disulfide linked gamma chains. Interacts with IGHE (via CH3 region). In terms of tissue distribution, expressed in leukocytes and pinealocytes at night (at protein level).

The protein resides in the cell membrane. It is found in the secreted. High-affinity receptor for immunoglobulin epsilon/IgE. Mediates IgE effector functions in myeloid cells. Upon IgE binding and antigen/allergen cross-linking initiates signaling pathways that lead to myeloid cell activation and differentiation. On mast cells, basophils and eosinophils stimulates the secretion of vasoactive amines, lipid mediators and cytokines that contribute to inflammatory response, tissue remodeling and cytotoxicity against microbes. Triggers the immediate hypersensitivity response to allergens as a host defense mechanism against helminth parasites, pathogenic bacteria and venom toxicity. When dysregulated, it can elicit harmful life-threatening allergic and anaphylactic reactions. The polypeptide is High affinity immunoglobulin epsilon receptor subunit alpha (Fcer1a) (Rattus norvegicus (Rat)).